The sequence spans 154 residues: Ubiquitin-like protein 4A-A (154 aa).

The region spanning 1-76 (MILTVKPLQG…LNLVVRPAGE (76 aa)) is the Ubiquitin-like domain.

Component of the BAT3 complex.

The protein localises to the cytoplasm. Its subcellular location is the cytosol. In terms of biological role, component of the BAT3 complex, a multiprotein complex involved in the post-translational delivery of tail-anchored (TA) membrane proteins to the endoplasmic reticulum membrane. TA membrane proteins, also named type II transmembrane proteins, contain a single C-terminal transmembrane region. The chain is Ubiquitin-like protein 4A-A (ubl4aa) from Oncorhynchus mykiss (Rainbow trout).